The sequence spans 97 residues: Large ribosomal subunit protein bL28 (97 aa).

This sequence belongs to the bacterial ribosomal protein bL28 family.

This is Large ribosomal subunit protein bL28 from Rhizorhabdus wittichii (strain DSM 6014 / CCUG 31198 / JCM 15750 / NBRC 105917 / EY 4224 / RW1) (Sphingomonas wittichii).